The sequence spans 352 residues: Adenosine deaminase (352 aa).

Residue A2 is modified to N-acetylalanine. The Zn(2+) site is built by H15 and H17. Residues H17 and D19 each contribute to the substrate site. N6-acetyllysine is present on K54. Position 184 (G184) interacts with substrate. H214 contributes to the Zn(2+) binding site. The active-site Proton donor is E217. Position 232 is an N6-acetyllysine (K232). Zn(2+) is bound at residue D295. D296 lines the substrate pocket.

It belongs to the metallo-dependent hydrolases superfamily. Adenosine and AMP deaminases family. As to quaternary structure, interacts with DPP4 (via extracellular domain). Interacts with PLG (via Kringle 4 domain); the interaction stimulates PLG activation when in complex with DPP4. Zn(2+) serves as cofactor. In terms of tissue distribution, detected in brain neurons in the median emninence (at protein level). Expressed in secondary deciduum (at protein level). Found in all tissues, occurs in large amounts in T-lymphocytes and, at the time of weaning, in gastrointestinal tissues.

The protein resides in the cell membrane. Its subcellular location is the cell junction. The protein localises to the cytoplasmic vesicle lumen. It localises to the cytoplasm. It is found in the lysosome. It catalyses the reaction adenosine + H2O + H(+) = inosine + NH4(+). The enzyme catalyses 2'-deoxyadenosine + H2O + H(+) = 2'-deoxyinosine + NH4(+). The catalysed reaction is cordycepin + H2O + H(+) = 3'-deoxyinosine + NH4(+). Functionally, catalyzes the hydrolytic deamination of adenosine and 2-deoxyadenosine. Plays an important role in purine metabolism and in adenosine homeostasis. Modulates signaling by extracellular adenosine, and so contributes indirectly to cellular signaling events. Acts as a positive regulator of T-cell coactivation, by binding DPP4. Its interaction with DPP4 regulates lymphocyte-epithelial cell adhesion. Enhances dendritic cell immunogenicity by affecting dendritic cell costimulatory molecule expression and cytokines and chemokines secretion. Enhances CD4+ T-cell differentiation and proliferation. Acts as a positive modulator of adenosine receptors ADORA1 and ADORA2A, by enhancing their ligand affinity via conformational change. Stimulates plasminogen activation. Plays a role in male fertility. Plays a protective role in early postimplantation embryonic development. Also responsible for the deamination of cordycepin (3'-deoxyadenosine), a fungal natural product that shows antitumor, antibacterial, antifungal, antivirus, and immune regulation properties. The sequence is that of Adenosine deaminase (Ada) from Mus musculus (Mouse).